The sequence spans 143 residues: Small ribosomal subunit protein uS12 (143 aa).

Pro62 carries the post-translational modification Hydroxyproline.

Belongs to the universal ribosomal protein uS12 family. Component of the 40S small ribosomal subunit.

The protein localises to the cytoplasm. It is found in the cytosol. The protein resides in the rough endoplasmic reticulum. This chain is Small ribosomal subunit protein uS12 (RPS23), found in Ciona intestinalis (Transparent sea squirt).